The sequence spans 574 residues: 2-succinyl-5-enolpyruvyl-6-hydroxy-3-cyclohexene-1-carboxylate synthase (574 aa).

This sequence belongs to the TPP enzyme family. MenD subfamily. Homodimer. Mg(2+) serves as cofactor. Mn(2+) is required as a cofactor. It depends on thiamine diphosphate as a cofactor.

The enzyme catalyses isochorismate + 2-oxoglutarate + H(+) = 5-enolpyruvoyl-6-hydroxy-2-succinyl-cyclohex-3-ene-1-carboxylate + CO2. The protein operates within quinol/quinone metabolism; 1,4-dihydroxy-2-naphthoate biosynthesis; 1,4-dihydroxy-2-naphthoate from chorismate: step 2/7. It participates in quinol/quinone metabolism; menaquinone biosynthesis. Catalyzes the thiamine diphosphate-dependent decarboxylation of 2-oxoglutarate and the subsequent addition of the resulting succinic semialdehyde-thiamine pyrophosphate anion to isochorismate to yield 2-succinyl-5-enolpyruvyl-6-hydroxy-3-cyclohexene-1-carboxylate (SEPHCHC). The sequence is that of 2-succinyl-5-enolpyruvyl-6-hydroxy-3-cyclohexene-1-carboxylate synthase from Vibrio atlanticus (strain LGP32) (Vibrio splendidus (strain Mel32)).